The primary structure comprises 331 residues: Holliday junction branch migration complex subunit RuvB (331 aa).

The segment at 1–182 (MSSDTLHKYE…FGIPLHLEFY (182 aa)) is large ATPase domain (RuvB-L). ATP is bound by residues leucine 21, arginine 22, glycine 63, lysine 66, threonine 67, threonine 68, 129 to 131 (EDY), arginine 172, tyrosine 182, and arginine 219. Residue threonine 67 coordinates Mg(2+). Positions 183–254 (SVDELVLVIK…FANSALFRLG (72 aa)) are small ATPAse domain (RuvB-S). A head domain (RuvB-H) region spans residues 257 to 331 (GAGFDKMDLK…FEYLLSSKYI (75 aa)). Residues arginine 310 and arginine 315 each coordinate DNA.

Belongs to the RuvB family. In terms of assembly, homohexamer. Forms an RuvA(8)-RuvB(12)-Holliday junction (HJ) complex. HJ DNA is sandwiched between 2 RuvA tetramers; dsDNA enters through RuvA and exits via RuvB. An RuvB hexamer assembles on each DNA strand where it exits the tetramer. Each RuvB hexamer is contacted by two RuvA subunits (via domain III) on 2 adjacent RuvB subunits; this complex drives branch migration. In the full resolvosome a probable DNA-RuvA(4)-RuvB(12)-RuvC(2) complex forms which resolves the HJ.

The protein resides in the cytoplasm. The catalysed reaction is ATP + H2O = ADP + phosphate + H(+). Functionally, the RuvA-RuvB-RuvC complex processes Holliday junction (HJ) DNA during genetic recombination and DNA repair, while the RuvA-RuvB complex plays an important role in the rescue of blocked DNA replication forks via replication fork reversal (RFR). RuvA specifically binds to HJ cruciform DNA, conferring on it an open structure. The RuvB hexamer acts as an ATP-dependent pump, pulling dsDNA into and through the RuvAB complex. RuvB forms 2 homohexamers on either side of HJ DNA bound by 1 or 2 RuvA tetramers; 4 subunits per hexamer contact DNA at a time. Coordinated motions by a converter formed by DNA-disengaged RuvB subunits stimulates ATP hydrolysis and nucleotide exchange. Immobilization of the converter enables RuvB to convert the ATP-contained energy into a lever motion, pulling 2 nucleotides of DNA out of the RuvA tetramer per ATP hydrolyzed, thus driving DNA branch migration. The RuvB motors rotate together with the DNA substrate, which together with the progressing nucleotide cycle form the mechanistic basis for DNA recombination by continuous HJ branch migration. Branch migration allows RuvC to scan DNA until it finds its consensus sequence, where it cleaves and resolves cruciform DNA. This is Holliday junction branch migration complex subunit RuvB from Anaplasma marginale (strain St. Maries).